The sequence spans 202 residues: MLSDELKLLVGLGNPGTEYEKTRHNVGFMVLEEIARKNNCSFRESKKIFGRTCEYGSGIEKTRLLMPNTYMNESGKSVRLAKDWFNFQNNQLIVLVDDMDLPLGKIRVRSKGSSGGHNGLKSIINHLGTAEFKRLKIGIGAPSNDQQERKSKTVSHVLGRFSKEEFIILNFIIQEIISCIESITSNNWEKISTRLNSYKPDN.

Tyr-19 serves as a coordination point for tRNA. His-24 serves as the catalytic Proton acceptor. Tyr-70, Asn-72, and Asn-118 together coordinate tRNA.

Belongs to the PTH family. In terms of assembly, monomer.

The protein resides in the cytoplasm. It carries out the reaction an N-acyl-L-alpha-aminoacyl-tRNA + H2O = an N-acyl-L-amino acid + a tRNA + H(+). Functionally, hydrolyzes ribosome-free peptidyl-tRNAs (with 1 or more amino acids incorporated), which drop off the ribosome during protein synthesis, or as a result of ribosome stalling. In terms of biological role, catalyzes the release of premature peptidyl moieties from peptidyl-tRNA molecules trapped in stalled 50S ribosomal subunits, and thus maintains levels of free tRNAs and 50S ribosomes. In Prochlorococcus marinus (strain NATL1A), this protein is Peptidyl-tRNA hydrolase.